Here is a 514-residue protein sequence, read N- to C-terminus: ATP synthase subunit alpha (514 aa).

170-177 (GDRQIGKS) is a binding site for ATP.

This sequence belongs to the ATPase alpha/beta chains family. As to quaternary structure, F-type ATPases have 2 components, CF(1) - the catalytic core - and CF(0) - the membrane proton channel. CF(1) has five subunits: alpha(3), beta(3), gamma(1), delta(1), epsilon(1). CF(0) has three main subunits: a(1), b(2) and c(9-12). The alpha and beta chains form an alternating ring which encloses part of the gamma chain. CF(1) is attached to CF(0) by a central stalk formed by the gamma and epsilon chains, while a peripheral stalk is formed by the delta and b chains.

It localises to the cell inner membrane. It catalyses the reaction ATP + H2O + 4 H(+)(in) = ADP + phosphate + 5 H(+)(out). Its function is as follows. Produces ATP from ADP in the presence of a proton gradient across the membrane. The alpha chain is a regulatory subunit. In Chromohalobacter salexigens (strain ATCC BAA-138 / DSM 3043 / CIP 106854 / NCIMB 13768 / 1H11), this protein is ATP synthase subunit alpha.